We begin with the raw amino-acid sequence, 1056 residues long: Isoleucine--tRNA ligase (1056 aa).

Positions 56–66 (PFATGLPHYGH) match the 'HIGH' region motif. The 'KMSKS' region motif lies at 603–607 (KMSKS). Lysine 606 lines the ATP pocket.

It belongs to the class-I aminoacyl-tRNA synthetase family. IleS type 2 subfamily. As to quaternary structure, monomer. Zn(2+) serves as cofactor.

The protein resides in the cytoplasm. The catalysed reaction is tRNA(Ile) + L-isoleucine + ATP = L-isoleucyl-tRNA(Ile) + AMP + diphosphate. Catalyzes the attachment of isoleucine to tRNA(Ile). As IleRS can inadvertently accommodate and process structurally similar amino acids such as valine, to avoid such errors it has two additional distinct tRNA(Ile)-dependent editing activities. One activity is designated as 'pretransfer' editing and involves the hydrolysis of activated Val-AMP. The other activity is designated 'posttransfer' editing and involves deacylation of mischarged Val-tRNA(Ile). This Bdellovibrio bacteriovorus (strain ATCC 15356 / DSM 50701 / NCIMB 9529 / HD100) protein is Isoleucine--tRNA ligase.